The primary structure comprises 211 residues: Mitotic spindle assembly checkpoint protein MAD2B (211 aa).

One can recognise an HORMA domain in the interval Gln13–Val203. The mediates interaction with REV1 and REV3L and homodimerization stretch occupies residues Glu21–Ala155.

Homooligomer. Heterodimer with REV3L. This dimer forms the minimal DNA polymerase zeta complex (Pol-zeta2), with REV3L bearing DNA polymerase catalytic activity, although its activity is very low in this context. Component of the tetrameric Pol-zeta complex (Pol-zeta4), which consists of REV3L, MAD2L2, POLD2 and POLD3; Pol-zeta4 is the fully active form of DNA polymerase zeta. Component of the shieldin complex, consisting of SHLD1, SHLD2, SHLD3 and MAD2L2/REV7. Within the complex, SHLD2 forms a scaffold which interacts with a SHLD3-MAD2L2 subcomplex via its N-terminus, and with SHLD1 via its C-terminus. Interacts with REV1. Interacts with ADAM9. Interacts with CHAMP1. Interacts with FZR1 (in complex with the anaphase promoting complex APC). May interact with CDC20. Interacts with RAN. Interacts with ELK1; the interaction is direct and recruits MAD2L2 to ELK1-specific promoters. May interact with the JNK kinases MAPK8 and/or MAPK9 to stimulate ELK1 phosphorylation and transcriptional activity upon DNA damage. Interacts with TCF7L2; prevents its binding to promoters and negatively modulates its transcriptional activity. Interacts with YY1AP1. Interacts with PRCC; the interaction is direct. Interacts with POGZ. Interacts with ASTE1.

It localises to the nucleus. It is found in the cytoplasm. Its subcellular location is the cytoskeleton. The protein resides in the spindle. Its function is as follows. Adapter protein able to interact with different proteins and involved in different biological processes. Mediates the interaction between the error-prone DNA polymerase zeta catalytic subunit REV3L and the inserter polymerase REV1, thereby mediating the second polymerase switching in translesion DNA synthesis. Translesion DNA synthesis releases the replication blockade of replicative polymerases, stalled in presence of DNA lesions. Component of the shieldin complex, which plays an important role in repair of DNA double-stranded breaks (DSBs). During G1 and S phase of the cell cycle, the complex functions downstream of TP53BP1 to promote non-homologous end joining (NHEJ) and suppress DNA end resection. Mediates various NHEJ-dependent processes including immunoglobulin class-switch recombination, and fusion of unprotected telomeres. May also regulate another aspect of cellular response to DNA damage through regulation of the JNK-mediated phosphorylation and activation of the transcriptional activator ELK1. Inhibits the FZR1- and probably CDC20-mediated activation of the anaphase promoting complex APC thereby regulating progression through the cell cycle. Regulates TCF7L2-mediated gene transcription and may play a role in epithelial-mesenchymal transdifferentiation. This is Mitotic spindle assembly checkpoint protein MAD2B (Mad2l2) from Rattus norvegicus (Rat).